The chain runs to 632 residues: tRNA uridine 5-carboxymethylaminomethyl modification enzyme MnmG (632 aa).

Residues 13–18 (GGGHAG), valine 125, and serine 180 each bind FAD. Residue 273–287 (GPRYCPSIEDKVMRF) participates in NAD(+) binding. Residue glutamine 370 coordinates FAD.

It belongs to the MnmG family. Homodimer. Heterotetramer of two MnmE and two MnmG subunits. It depends on FAD as a cofactor.

It localises to the cytoplasm. NAD-binding protein involved in the addition of a carboxymethylaminomethyl (cmnm) group at the wobble position (U34) of certain tRNAs, forming tRNA-cmnm(5)s(2)U34. The protein is tRNA uridine 5-carboxymethylaminomethyl modification enzyme MnmG of Vibrio vulnificus (strain CMCP6).